The sequence spans 168 residues: Cofilin-1-A (168 aa).

The residue at position 2 (A2) is an N-acetylalanine. The ADF-H domain maps to 4–153 (GVMVSDDVIK…NDPCNLADKL (150 aa)). The Nuclear localization signal signature appears at 30 to 34 (KKRKK).

Belongs to the actin-binding proteins ADF family. In terms of processing, inactive when phosphorylated. Phosphorylation levels vary during development. Oocytes contain only the phosphorylated form, and 80-95% of cfl1 protein is phosphorylated in unfertilized eggs. Rapid dephosphorylation occurs within 30 minutes after fertilization. Phosphorylation levels increase again between the morula and blastula stages (5-8 hpf) and then decrease again as gastrulation approaches. Dephosphorylated by pdxp. In terms of tissue distribution, expressed diffusely in both animal and vegetal hemispheres of the oocyte. During cleavage, expression accumulates around the cleavage furrow, along the vegetal membrane, and later in the midbody. Strongly expressed in the animal hemisphere during blastula stages, with most cells showing expression by gastrulation. By stage 17, expression is highest in cells of the developing neuroectoderm, and at stage 24 the notochord, neural tube, neural crest, somites and some cells of the archenteron show high expression. By stage 35, expression has declined in the notochord, but remains in the neural tube, epidermis and a layer of cells in the archenteron. Also highly expressed in the retina and neuronal cell bodies at the base of the cement gland but not the cement gland itself. At stage 38, expression is widespread, being highest in the nervous system and retina. In the adult, expression is high in the brain, heart, oocyte, stomach, and low in skeletal muscle.

It is found in the nucleus matrix. The protein localises to the cytoplasm. It localises to the cytoskeleton. Its subcellular location is the cell cortex. The protein resides in the membrane. Functionally, may play a role in the regulation of cell morphology and cytoskeletal organization. Binds to F-actin and exhibits pH-sensitive F-actin depolymerizing activity. Required for formation of the cleavage furrow during cytokinesis. The polypeptide is Cofilin-1-A (cfl1-a) (Xenopus laevis (African clawed frog)).